Consider the following 64-residue polypeptide: MNQNGSQIHSDGNGHSDDTDTPGVSAGQVSVNTAGVDDLLDEIDGLLESNAEEFVRSYVQKGGQ.

Over residues 1-10 the composition is skewed to polar residues; sequence MNQNGSQIHS. A disordered region spans residues 1–32; that stretch reads MNQNGSQIHSDGNGHSDDTDTPGVSAGQVSVN. Residues 20-58 are ARC ATPase binding; sequence DTPGVSAGQVSVNTAGVDDLLDEIDGLLESNAEEFVRSY. A Deamidated glutamine modification is found at Gln-64. Gln-64 is covalently cross-linked (Isoglutamyl lysine isopeptide (Gln-Lys) (interchain with K-? in acceptor proteins)).

It belongs to the prokaryotic ubiquitin-like protein family. As to quaternary structure, strongly interacts with the proteasome-associated ATPase ARC through a hydrophobic interface; the interacting region of Pup lies in its C-terminal half. There is one Pup binding site per ARC hexamer ring. Post-translationally, is modified by deamidation of its C-terminal glutamine to glutamate by the deamidase Dop, a prerequisite to the subsequent pupylation process.

The protein operates within protein degradation; proteasomal Pup-dependent pathway. Functionally, protein modifier that is covalently attached to lysine residues of substrate proteins, thereby targeting them for proteasomal degradation. The tagging system is termed pupylation. The polypeptide is Prokaryotic ubiquitin-like protein Pup (Corynebacterium diphtheriae (strain ATCC 700971 / NCTC 13129 / Biotype gravis)).